The sequence spans 1755 residues: Transposon Ty1-GR2 Gag-Pol polyprotein (1755 aa).

Residues 1 to 16 are compositionally biased toward low complexity; that stretch reads MESQQLSQHSHISHGS. Disordered regions lie at residues 1-93, 126-173, and 352-421; these read MESQ…MMTQ, PQSQ…RPPP, and GSRN…SKST. Polar residues-rich tracts occupy residues 48–60 and 127–152; these read TKANSQQTTTPAS and QSQFPQYPSSVGTPLSTPSPESGNTF. The segment covering 153–165 has biased composition (low complexity); it reads TDSSSADSDMTST. The interval 299–401 is RNA-binding; sequence NNGIHINNKV…NSKSKTARAH (103 aa). The span at 402–418 shows a compositional bias: low complexity; it reads NVSTSNNSPSTDNDSIS. Ser416 carries the post-translational modification Phosphoserine. Residue Asp461 is the For protease activity; shared with dimeric partner of the active site. The interval 583–640 is integrase-type zinc finger-like; it reads NVHTSESTRKYPYPFIHRMLAHANAQTIRYSLKNNTITYFNESDVDWSSAIDYQCPDC. Positions 660-835 constitute an Integrase catalytic domain; that stretch reads NSYEPFQYLH…AGLDISTLLP (176 aa). The Mg(2+) site is built by Asp671 and Asp736. Disordered stretches follow at residues 956–1087, 1092–1111, and 1130–1187; these read SKAV…ETEK, RSPSIDASPPENNSSHNIVP, and DLPL…DNET. Residues 960 to 969 show a composition bias toward low complexity; that stretch reads SPTDSTPPST. Residues 1005–1015 show a composition bias toward polar residues; the sequence is STPQISNIEST. Residues 1038 to 1053 are compositionally biased toward basic and acidic residues; that stretch reads ESSHASKSKDFRHSDS. Composition is skewed to polar residues over residues 1054 to 1082 and 1101 to 1111; these read YSENETNHTNVPISSTGGTNNKTVPQISD and PENNSSHNIVP. The short motif at 1178–1212 is the Bipartite nuclear localization signal element; it reads KKRSLEDNETEIKVSRDTWNTKNMRSLEPPRSKKR. The 139-residue stretch at 1338–1476 folds into the Reverse transcriptase Ty1/copia-type domain; sequence NNYYITQLDI…DILGLEIKYQ (139 aa). Residues Asp1346, Asp1427, Asp1428, Asp1610, Glu1652, and Asp1685 each contribute to the Mg(2+) site. The RNase H Ty1/copia-type domain occupies 1610 to 1752; that stretch reads DASYGNQPYY…IKTFKLLTNK (143 aa).

The capsid protein forms a homotrimer, from which the VLPs are assembled. The protease is a homodimer, whose active site consists of two apposed aspartic acid residues. In terms of processing, initially, virus-like particles (VLPs) are composed of the structural unprocessed proteins Gag and Gag-Pol, and also contain the host initiator methionine tRNA (tRNA(i)-Met) which serves as a primer for minus-strand DNA synthesis, and a dimer of genomic Ty RNA. Processing of the polyproteins occurs within the particle and proceeds by an ordered pathway, called maturation. First, the protease (PR) is released by autocatalytic cleavage of the Gag-Pol polyprotein yielding capsid protein p45 and a Pol-p154 precursor protein. This cleavage is a prerequisite for subsequent processing of Pol-p154 at the remaining sites to release the mature structural and catalytic proteins. Maturation takes place prior to the RT reaction and is required to produce transposition-competent VLPs.

The protein resides in the cytoplasm. It localises to the nucleus. The enzyme catalyses DNA(n) + a 2'-deoxyribonucleoside 5'-triphosphate = DNA(n+1) + diphosphate. It catalyses the reaction Endonucleolytic cleavage to 5'-phosphomonoester.. Functionally, capsid protein (CA) is the structural component of the virus-like particle (VLP), forming the shell that encapsulates the retrotransposons dimeric RNA genome. The particles are assembled from trimer-clustered units and there are holes in the capsid shells that allow for the diffusion of macromolecules. CA also has nucleocapsid-like chaperone activity, promoting primer tRNA(i)-Met annealing to the multipartite primer-binding site (PBS), dimerization of Ty1 RNA and initiation of reverse transcription. In terms of biological role, the aspartyl protease (PR) mediates the proteolytic cleavages of the Gag and Gag-Pol polyproteins after assembly of the VLP. Reverse transcriptase/ribonuclease H (RT) is a multifunctional enzyme that catalyzes the conversion of the retro-elements RNA genome into dsDNA within the VLP. The enzyme displays a DNA polymerase activity that can copy either DNA or RNA templates, and a ribonuclease H (RNase H) activity that cleaves the RNA strand of RNA-DNA heteroduplexes during plus-strand synthesis and hydrolyzes RNA primers. The conversion leads to a linear dsDNA copy of the retrotransposon that includes long terminal repeats (LTRs) at both ends. Its function is as follows. Integrase (IN) targets the VLP to the nucleus, where a subparticle preintegration complex (PIC) containing at least integrase and the newly synthesized dsDNA copy of the retrotransposon must transit the nuclear membrane. Once in the nucleus, integrase performs the integration of the dsDNA into the host genome. This chain is Transposon Ty1-GR2 Gag-Pol polyprotein (TY1B-GR2), found in Saccharomyces cerevisiae (strain ATCC 204508 / S288c) (Baker's yeast).